Here is a 317-residue protein sequence, read N- to C-terminus: Tegument protein UL14 homolog (317 aa).

Positions 166 to 291 (IAADPHSPRS…QKWLGGIPPL (126 aa)) are disordered. Positions 182–195 (KAPEDARCGARKPG) are enriched in basic and acidic residues. Residues 198-211 (NNYTPSAQPRSQET) show a composition bias toward polar residues. Basic and acidic residues-rich tracts occupy residues 217-236 (ASPD…EHHS) and 249-265 (SERR…KSSE).

The protein belongs to the alphaherpesvirinae HHV-1 UL14 protein family.

It localises to the virion tegument. Its subcellular location is the host cytoplasm. The protein localises to the host nucleus. Contributes to the nuclear transport of the viral transcriptional activator VP16 during the early phase of infection. Therefore, participates indirectly in the regulation of the immediate-early gene expression. Additionally, seems to be important for efficient nuclear targeting of capsids. The chain is Tegument protein UL14 homolog from Equus caballus (Horse).